Here is a 290-residue protein sequence, read N- to C-terminus: Glycine--tRNA ligase alpha subunit (290 aa).

It belongs to the class-II aminoacyl-tRNA synthetase family. Tetramer of two alpha and two beta subunits.

Its subcellular location is the cytoplasm. The enzyme catalyses tRNA(Gly) + glycine + ATP = glycyl-tRNA(Gly) + AMP + diphosphate. The sequence is that of Glycine--tRNA ligase alpha subunit from Prochlorococcus marinus (strain NATL1A).